The following is a 471-amino-acid chain: Iroquois-class homeodomain protein IRX-2 (471 aa).

A DNA-binding region (homeobox; TALE-type) is located at residues 112 to 175 (LNDPAYRKNA…ANARRRLKKE (64 aa)). 2 disordered regions span residues 176–373 (NKMT…SPYP) and 424–471 (APKA…QPYL). S186 carries the post-translational modification Phosphoserine. Residues 195–209 (DATRSKDESPDKAQE) show a composition bias toward basic and acidic residues. The segment covering 261-273 (DDLEDDEDDDEEG) has biased composition (acidic residues). Low complexity predominate over residues 355-367 (PAAAAPASTGAPP). Positions 462-471 (VVGGGVQPYL) are enriched in gly residues.

Belongs to the TALE/IRO homeobox family.

The protein resides in the nucleus. The protein is Iroquois-class homeodomain protein IRX-2 (IRX2) of Homo sapiens (Human).